Reading from the N-terminus, the 296-residue chain is Bifunctional protein FolD (296 aa).

NADP(+) is bound by residues 166–168 (GRS), serine 191, and isoleucine 232.

This sequence belongs to the tetrahydrofolate dehydrogenase/cyclohydrolase family. Homodimer.

It carries out the reaction (6R)-5,10-methylene-5,6,7,8-tetrahydrofolate + NADP(+) = (6R)-5,10-methenyltetrahydrofolate + NADPH. The catalysed reaction is (6R)-5,10-methenyltetrahydrofolate + H2O = (6R)-10-formyltetrahydrofolate + H(+). It participates in one-carbon metabolism; tetrahydrofolate interconversion. Its function is as follows. Catalyzes the oxidation of 5,10-methylenetetrahydrofolate to 5,10-methenyltetrahydrofolate and then the hydrolysis of 5,10-methenyltetrahydrofolate to 10-formyltetrahydrofolate. This Cereibacter sphaeroides (strain ATCC 17025 / ATH 2.4.3) (Rhodobacter sphaeroides) protein is Bifunctional protein FolD.